We begin with the raw amino-acid sequence, 139 residues long: MPTINQLIRKGRVDKVKKSDSPALNKGYNSFKKSQTDVSSPQKRGVCTRVGTMTPKKPNSALRKYARVRLTNQIEVTAYIPGIGHNLQEHSVVLIRGGRVKDLPGVRYHIVRGALDTAGVQNRMQGRSKYGTKKPKDKK.

The tract at residues 12 to 55 (RVDKVKKSDSPALNKGYNSFKKSQTDVSSPQKRGVCTRVGTMTP) is disordered. Residues 27–42 (GYNSFKKSQTDVSSPQ) show a composition bias toward polar residues. 3-methylthioaspartic acid is present on aspartate 102. A disordered region spans residues 119–139 (GVQNRMQGRSKYGTKKPKDKK). A compositionally biased stretch (basic residues) spans 130–139 (YGTKKPKDKK).

It belongs to the universal ribosomal protein uS12 family. In terms of assembly, part of the 30S ribosomal subunit. Contacts proteins S8 and S17. May interact with IF1 in the 30S initiation complex.

Its function is as follows. With S4 and S5 plays an important role in translational accuracy. In terms of biological role, interacts with and stabilizes bases of the 16S rRNA that are involved in tRNA selection in the A site and with the mRNA backbone. Located at the interface of the 30S and 50S subunits, it traverses the body of the 30S subunit contacting proteins on the other side and probably holding the rRNA structure together. The combined cluster of proteins S8, S12 and S17 appears to hold together the shoulder and platform of the 30S subunit. In Shouchella clausii (strain KSM-K16) (Alkalihalobacillus clausii), this protein is Small ribosomal subunit protein uS12.